The chain runs to 383 residues: tRNA (guanine-N(7)-)-methyltransferase non-catalytic subunit wuho (383 aa).

5 WD repeats span residues 61-101, 105-144, 148-187, 191-231, and 289-329; these read NLEV…ALLL, ALAR…APPK, GHLS…DIHS, GHKE…EVLQ, and AGSW…QAES.

Belongs to the WD repeat TRM82 family. As to quaternary structure, forms a heterodimer with the catalytic subunit Mettl1. Interacts with mei-P26 and weakly interacts with bgcn; required for the function or formation of the mei-P26-bgcn-bam-sxl complex. Interacts with nanos; may be involved in mei-P26-dependent derepression of the BMP signaling pathway. Interacts with Myc; the interaction may be mediated by mei-P26 and may be involved in the regulation of ribosome biogenesis. In terms of tissue distribution, in testis, it is present at high level in hub cells, a niche for germline stem cells of testis. Ubiquitously expressed in all testicular cells throughout spermatogenesis. Ubiquitously expressed in all germline and somatic cells of the ovary.

Its subcellular location is the nucleus. The protein localises to the cytoplasm. It participates in tRNA modification; N(7)-methylguanine-tRNA biosynthesis. Functionally, required for the Mettl1-dependent formation of N(7)-methylguanine at position 46 (m7G46) in tRNA. In the Mettl1-wuho methyltransferase complex, it is required to stabilize and induce conformational changes of the catalytic subunit. Required for binding of nanos mRNA and repression of translation by the mei-P26-bgcn-bam-sxl complex. May cooperate with mei-P26 and nanos to derepress the BMP signaling pathway. May cooperate with mei-P26 to suppress expression of a subset of microRNAs. May cooperate with mei-P26 to regulate bam expression levels in germline cells during gametogenesis. Required to promote mitosis to meiosis transition during gametogenesis. May regulate germline cell division in part by regulating ribosome biogenesis. This is tRNA (guanine-N(7)-)-methyltransferase non-catalytic subunit wuho from Drosophila mojavensis (Fruit fly).